Reading from the N-terminus, the 203-residue chain is Peptidyl-tRNA hydrolase (203 aa).

Tyr14 lines the tRNA pocket. Residue His19 is the Proton acceptor of the active site. TRNA contacts are provided by Tyr64, Asn66, and Asn112.

The protein belongs to the PTH family. In terms of assembly, monomer.

It is found in the cytoplasm. It catalyses the reaction an N-acyl-L-alpha-aminoacyl-tRNA + H2O = an N-acyl-L-amino acid + a tRNA + H(+). Its function is as follows. Hydrolyzes ribosome-free peptidyl-tRNAs (with 1 or more amino acids incorporated), which drop off the ribosome during protein synthesis, or as a result of ribosome stalling. In terms of biological role, catalyzes the release of premature peptidyl moieties from peptidyl-tRNA molecules trapped in stalled 50S ribosomal subunits, and thus maintains levels of free tRNAs and 50S ribosomes. The sequence is that of Peptidyl-tRNA hydrolase from Methylobacterium sp. (strain 4-46).